The following is a 623-amino-acid chain: Heterogeneous nuclear ribonucleoprotein Q (623 aa).

Position 2 is an N-acetylalanine (alanine 2). Serine 159 bears the Phosphoserine mark. RRM domains are found at residues 162–241 (TEIF…ISVA), 243–325 (NRLF…WADP), and 338–408 (KVLF…FAKP). Lysine 168 is covalently cross-linked (Glycyl lysine isopeptide (Lys-Gly) (interchain with G-Cter in SUMO2)). An N6-acetyllysine modification is found at lysine 221. Lysine 363 is modified (N6-acetyllysine). Phosphotyrosine is present on tyrosine 373. Residues 400-561 (NIEIVFAKPP…GARGGRGGNV (162 aa)) are interaction with APOBEC1. The residue at position 444 (arginine 444) is an Asymmetric dimethylarginine; by PRMT1; alternate. Arginine 444 is modified (omega-N-methylarginine; by PRMT1; alternate). 6 consecutive repeat copies span residues 448 to 450 (RGG), 451 to 453 (RGG), 460 to 464 (YYGYE), 469 to 472 (YYGY), 478 to 480 (RGG), and 485 to 488 (YYGY). An 8 X 3 AA repeats of R-G-G region spans residues 448-559 (RGGRGGYGYP…VRGARGGRGG (112 aa)). The interval 460-488 (YYGYEDYYDYYGYDYHNYRGGYEDPYYGY) is 3 X 4 AA repeats of Y-Y-G-Y. Arginine 496 is modified (omega-N-methylarginine; by PRMT1). Residues 497–623 (GRGGRGARGA…YQDTFGQQWK (127 aa)) are disordered. The 1-4 repeat unit spans residues 498 to 500 (RGG). Over residues 504–522 (RGAAPSRGRGAAPPRGRAG) the composition is skewed to low complexity. Arginine 510 is subject to Asymmetric dimethylarginine; by PRMT1. Asymmetric dimethylarginine; by PRMT1; alternate occurs at positions 518, 526, 536, and 539. Omega-N-methylarginine; by PRMT1; alternate is present on residues arginine 518, arginine 526, arginine 536, and arginine 539. An interaction with SMN region spans residues 518-549 (RGRAGYSQRGGPGSARGVRGARGGAQQQRGRG). Residues 526–528 (RGG) form a 1-5 repeat. Tandem repeats lie at residues 539 to 541 (RGG), 554 to 556 (RGG), and 557 to 559 (RGG). Residues 550 to 562 (VRGARGGRGGNVG) are compositionally biased toward gly residues. Positions 564–578 (KRKADGYNQPDSKRR) match the Bipartite nuclear localization signal motif. Over residues 580–595 (TNNQNWGSQPIAQQPL) the composition is skewed to polar residues. Serine 587 is subject to Phosphoserine. A Glycyl lysine isopeptide (Lys-Gly) (interchain with G-Cter in SUMO2) cross-link involves residue lysine 607. Over residues 611-623 (QEFYQDTFGQQWK) the composition is skewed to polar residues.

In terms of assembly, isoform 1 is a component of the APOB mRNA editosome complex and interacts with APOBEC1 and A1CF (APOBEC1 complementation factor). Part of a complex associated with the FOS mCRD domain and consisting of PABPC1, PAIP1, CSDE1/UNR, HNRPD and SYNCRIP. Isoform 3 interacts with HNRPR. Interacts with POLR2A hyperphosphorylated C-terminal domain. Isoform 1, isoform 2 and isoform 3 interact with SMN. Isoform 3 interacts through its C-terminal domain with SYT7, SYT8 and SYT9. The non-phosphorylated and phosphorylated forms are colocalized with PAIP1 in polysomes. Interacts with HABP4. Identified in a histone pre-mRNA complex, at least composed of ERI1, LSM11, SLBP, SNRPB, SYNCRIP and YBX1. Identified in the spliceosome C complex. Component of the coding region determinant (CRD)-mediated complex, composed of DHX9, HNRNPU, IGF2BP1, SYNCRIP and YBX1. Identified in a mRNP complex, at least composed of DHX9, DDX3X, ELAVL1, HNRNPU, IGF2BP1, ILF3, PABPC1, PCBP2, PTBP2, STAU1, STAU2, SYNCRIP and YBX1. Identified in a mRNP granule complex, at least composed of ACTB, ACTN4, DHX9, ERG, HNRNPA1, HNRNPA2B1, HNRNPAB, HNRNPD, HNRNPL, HNRNPR, HNRNPU, HSPA1, HSPA8, IGF2BP1, ILF2, ILF3, NCBP1, NCL, PABPC1, PABPC4, PABPN1, RPLP0, RPS3, RPS3A, RPS4X, RPS8, RPS9, SYNCRIP, YBX1 and untranslated mRNAs. Interacts with GTPBP1. Component of the GAIT complex; in humans the complex assembly seems to be a two-step process in which EPRS1 first associates with SYNCRIP to form a pre-GAIT complex which is deficient in GAIT element binding. (Microbial infection) Interacts with minute virus of mice (MVM) NS1 protein. As to quaternary structure, (Microbial infection) Interacts with herpes virus 8/HHV-8 protein vIRF-1; this interaction induces ubiquitination and degradation of SYNCRIP. In terms of processing, phosphorylated on tyrosine. The membrane-bound form found in microsomes is phosphorylated in vitro by insulin receptor tyrosine kinase (INSR). Phosphorylation is inhibited upon binding to RNA, whereas the cytoplasmic form is poorly phosphorylated. Ubiquitously expressed. Detected in heart, brain, pancreas, placenta, spleen, lung, liver, skeletal muscle, kidney, thymus, prostate, uterus, small intestine, colon, peripheral blood and testis.

The protein resides in the cytoplasm. The protein localises to the microsome. Its subcellular location is the endoplasmic reticulum. It localises to the nucleus. It is found in the nucleoplasm. Its function is as follows. Heterogenous nuclear ribonucleoprotein (hnRNP) implicated in mRNA processing mechanisms. Component of the CRD-mediated complex that promotes MYC mRNA stability. Isoform 1, isoform 2 and isoform 3 are associated in vitro with pre-mRNA, splicing intermediates and mature mRNA protein complexes. Isoform 1 binds to apoB mRNA AU-rich sequences. Isoform 1 is part of the APOB mRNA editosome complex and may modulate the postranscriptional C to U RNA-editing of the APOB mRNA through either by binding to A1CF (APOBEC1 complementation factor), to APOBEC1 or to RNA itself. May be involved in translationally coupled mRNA turnover. Implicated with other RNA-binding proteins in the cytoplasmic deadenylation/translational and decay interplay of the FOS mRNA mediated by the major coding-region determinant of instability (mCRD) domain. Interacts in vitro preferentially with poly(A) and poly(U) RNA sequences. Isoform 3 may be involved in cytoplasmic vesicle-based mRNA transport through interaction with synaptotagmins. Component of the GAIT (gamma interferon-activated inhibitor of translation) complex which mediates interferon-gamma-induced transcript-selective translation inhibition in inflammation processes. Upon interferon-gamma activation assembles into the GAIT complex which binds to stem loop-containing GAIT elements in the 3'-UTR of diverse inflammatory mRNAs (such as ceruplasmin) and suppresses their translation; seems not to be essential for GAIT complex function. This Homo sapiens (Human) protein is Heterogeneous nuclear ribonucleoprotein Q (SYNCRIP).